A 137-amino-acid polypeptide reads, in one-letter code: Leaf-specific thionin (137 aa).

An N-terminal signal peptide occupies residues 1-28 (MATNKSIKSVVICVLILGLVLEQVQVEA). 4 cysteine pairs are disulfide-bonded: Cys-31–Cys-68, Cys-32–Cys-60, Cys-40–Cys-58, and Cys-44–Cys-54. The propeptide at 75–137 (LNLLPESGEP…DGEVIQSVEA (63 aa)) is acidic domain.

This sequence belongs to the plant thionin (TC 1.C.44) family. 4 C-C subfamily.

The protein resides in the secreted. In terms of biological role, thionins are small plant proteins which are toxic to animal cells. They seem to exert their toxic effect at the level of the cell membrane. Their precise function is not known. The protein is Leaf-specific thionin (THI1.5) of Hordeum vulgare (Barley).